Consider the following 210-residue polypeptide: V-type sodium ATPase subunit D (210 aa).

Belongs to the V-ATPase D subunit family.

Its function is as follows. Involved in ATP-driven sodium extrusion. This chain is V-type sodium ATPase subunit D (ntpD), found in Enterococcus hirae (strain ATCC 9790 / DSM 20160 / JCM 8729 / LMG 6399 / NBRC 3181 / NCIMB 6459 / NCDO 1258 / NCTC 12367 / WDCM 00089 / R).